A 960-amino-acid polypeptide reads, in one-letter code: MAEVEAGAALELRGLPPEIPDELITLYFENHRRSGGGLLLSWQRLGCGGVLIFQDPADAKRVLAQAEHRLHGVRLSLRPAPPRAPERVLLQHLPPGTSPLSLEQHVQALLGAAGHPVQTCHALASPRQDCALVQLSTPLSEAEVSALAEQARNLPLNGATVSLAWVPQTRAVRVVDSASPVDLLLLELYLENERRSGGGPLEGLRSLPGQLGTVISFQQWQVAERVLKQKHWLQGIELSLVPHYDVLEPEALAEGVSGRDHSATQESGVIGHAPTGTGGLAGALTMAVGSGEAPQQLGTLLRAGPVGAPGQALPVDSGSIRIQGSMGSTSPVDPVESSTELPEQVGPMASDSVGVQEQEGLGEVATGQEGLMGLVGTAMESVETGLESPGYGEMQKQEGLVEMVMSVEPGAVRYLQLYYEDLLASLEDVALFPLEGTDVTGFRLCGARAPCQAAQELLQSLLGSISCHTLNMKHPGSARFLLGVEGQHLLHRLEAQFQCVFGTEHLASATLDIDPERTDPTEALQVLHGHITGIDQESLRLEDVRELLATLESPHGGEDRVPLEMEKEKPGGPGETVVEQQEEIPTLEAEEEPVALSTGARGQLEEEATLQLAIHRSLESQSQVADQQEANALRRAMALSLLEAEEALDEDTGGEAQLVVHTSFEQDVDELNQALSNALEAHLREETVSLQGRMLPPELGARLERCHDVSATLRGDRVVLRGFGVQPARAARHLAALLVDPWDQNLTFPLEASKPNLSEQGLKEPLGRLEALEENSQEFQDVVRAFYSTLDAVHGRIRIVRVERVSHPLLQQQYQLHRERLMQSCQQRPVEQVLYHGTSESAVLDICAHGFNRSFCGRNGTLYGQGVYFAKRASLSVLDRYSPPNAEGYKAVFVAQVLTGDYGQGSRGLKAPPLRVSGQVLRYDSAVDCLQQPRIFVIFHDTQALPTHLITCKNILPGTP.

E103 bears the ADP-ribosyl glutamic acid mark. Over residues 325–341 (SMGSTSPVDPVESSTEL) the composition is skewed to polar residues. Residues 325-346 (SMGSTSPVDPVESSTELPEQVG) are disordered. Phosphoserine occurs at positions 381 and 388. The interval 553 to 576 (SPHGGEDRVPLEMEKEKPGGPGET) is disordered. Residues 555-570 (HGGEDRVPLEMEKEKP) are compositionally biased toward basic and acidic residues. The Ubiquitin-interacting signature appears at 604 to 621 (LEEEATLQLAIHRSLESQ). The residue at position 617 (S617) is a Phosphoserine. Positions 649–856 (DEDTGGEAQL…CAHGFNRSFC (208 aa)) are myc binding. In terms of domain architecture, PARP catalytic spans 755–960 (PNLSEQGLKE…TCKNILPGTP (206 aa)). A PIP-box motif is present at residues 780 to 787 (QDVVRAFY). The residue at position 831 (E831) is an ADP-ribosyl glutamic acid.

This sequence belongs to the ARTD/PARP family. As to quaternary structure, interacts with MYC. Interacts with PARP14. Interacts (via-PIP box and ubiquitin-interacting motifs) with PCNA. Post-translationally, stimulated through its phosphorylation by CDK2. Acquires CDK-dependent phosphorylation through late-G1 to S phase, and from prometaphase to cytokinesis in the nucleolar organizing regions. Phosphorylation is suppressed in growth-arrested cells. Auto-mono-ADP-ribosylated on glutamate and lysine residues.

The protein resides in the cytoplasm. Its subcellular location is the nucleus. It catalyses the reaction L-lysyl-[protein] + NAD(+) = N(6)-(ADP-D-ribosyl)-L-lysyl-[protein] + nicotinamide + H(+). The catalysed reaction is L-aspartyl-[protein] + NAD(+) = 4-O-(ADP-D-ribosyl)-L-aspartyl-[protein] + nicotinamide. The enzyme catalyses L-glutamyl-[protein] + NAD(+) = 5-O-(ADP-D-ribosyl)-L-glutamyl-[protein] + nicotinamide. Functionally, ADP-ribosyltransferase that mediates mono-ADP-ribosylation of glutamate and aspartate residues on target proteins. In contrast to PARP1 and PARP2, it is not able to mediate poly-ADP-ribosylation. Catalyzes mono-ADP-ribosylation of GSK3B, leading to negatively regulate GSK3B kinase activity. Involved in translesion DNA synthesis in response to DNA damage via its interaction with PCNA. The sequence is that of Protein mono-ADP-ribosyltransferase PARP10 from Mus musculus (Mouse).